Here is a 256-residue protein sequence, read N- to C-terminus: Pimeloyl-[acyl-carrier protein] methyl ester esterase (256 aa).

In terms of domain architecture, AB hydrolase-1 spans 15 to 242 (HLVLLHGWGL…AAHAPFISHP (228 aa)). Residues Trp22, 82 to 83 (SL), and 143 to 147 (FLALQ) contribute to the substrate site. Residue Ser82 is the Nucleophile of the active site. Residues Asp207 and His235 contribute to the active site. Residue His235 participates in substrate binding.

Belongs to the AB hydrolase superfamily. Carboxylesterase BioH family. As to quaternary structure, monomer.

It is found in the cytoplasm. It catalyses the reaction 6-carboxyhexanoyl-[ACP] methyl ester + H2O = 6-carboxyhexanoyl-[ACP] + methanol + H(+). Its pathway is cofactor biosynthesis; biotin biosynthesis. In terms of biological role, the physiological role of BioH is to remove the methyl group introduced by BioC when the pimeloyl moiety is complete. It allows to synthesize pimeloyl-ACP via the fatty acid synthetic pathway through the hydrolysis of the ester bonds of pimeloyl-ACP esters. This chain is Pimeloyl-[acyl-carrier protein] methyl ester esterase, found in Escherichia coli O127:H6 (strain E2348/69 / EPEC).